A 446-amino-acid chain; its full sequence is Gasdermin-A (446 aa).

Positions 1–252 (MTMFENVTRA…FILIQASDVG (252 aa)) are triggers pyroptosis. A cardiolipin is bound at residue 9–13 (RALAR). Transmembrane regions (beta stranded) follow at residues 78–95 (NFSFKNMLDARVEGDVDV), 99–120 (VKVKGTAGLSRSSTLEVQTLSV), 164–180 (VTLERAGKAEGCFSLPF), and 184–198 (LGLQGSVNHKEAVTI).

The protein belongs to the gasdermin family. As to quaternary structure, homooligomer; homooligomeric ring-shaped pore complex containing 18-36 subunits when inserted in the membrane. In terms of processing, cleavage by bacterial SpeB relieves autoinhibition by releasing the N-terminal moiety (Gasdermin-A, N-terminal) that initiates pyroptosis. Post-translationally, palmitoylated. In terms of tissue distribution, expressed predominantly in the gastrointestinal (GI) tract and in the skin at a lower level. In the GI tract, the expression is highly restricted to the esophagus and forestomach.

It is found in the cytoplasm. It localises to the perinuclear region. Its subcellular location is the cytosol. The protein localises to the cell membrane. The full-length protein before cleavage is inactive: intramolecular interactions between N- and C-terminal domains mediate autoinhibition in the absence of activation signal. The intrinsic pyroptosis-inducing activity is carried by the released N-terminal moiety (Gasdermin-A, N-terminal) following cleavage by bacterial effector protein SpeB. Functionally, this form constitutes the precursor of the pore-forming protein and acts as a sensor of bacterial infection: upon infection, specifically cleaved by bacterial effector protein SpeB in epithelial cells, releasing the N-terminal moiety (Gasdermin-A, N-terminal) that binds to membranes and forms pores, triggering pyroptosis. Its function is as follows. Pore-forming protein that causes membrane permeabilization and pyroptosis. Released upon cleavage by bacterial effector protein SpeB, and binds to membrane inner leaflet lipids. Homooligomerizes within the membrane and forms pores of 10-15 nanometers (nm) of inner diameter, triggering pyroptosis. Pyroptosis triggers the elimination of the infected skin cell, depriving the pathogen of its protective niche, while inducing an inflammatory response. This ultimately prevents bacterial penetration of the epithelial barrier and a subsequent systemic dissemination of the pathogen. Binds to cardiolipin and other acidic phospholipids, such as phosphatidylserine, which mediate its targeting to the inner leaflet membrane. This Mus musculus (Mouse) protein is Gasdermin-A (Gsdma).